The sequence spans 544 residues: MFS-type transporter prx5 (544 aa).

The tract at residues 1–28 (MAVDTEKDSVQAGSPMETPGSPVDETTE) is disordered. Helical transmembrane passes span 36 to 56 (WIVS…IPVV), 90 to 110 (LDHL…VASA), 116 to 136 (VIAG…AAFA), 148 to 168 (IGVV…PVTA), 178 to 198 (AWNF…LLFL), 221 to 241 (GAFL…WAGV), 249 to 269 (VVAP…WESF), 290 to 310 (FTAP…SSIL), 330 to 350 (VILS…LTCF), 361 to 381 (LTGS…VTPT), 387 to 407 (IAFI…SIAI), 418 to 438 (GVSG…ATSI), and 505 to 525 (AIFV…AACL).

This sequence belongs to the major facilitator superfamily.

The protein localises to the cell membrane. MFS-type transporter; part of the gene cluster that mediates the biosynthesis of PR-toxin, a bicyclic sesquiterpene belonging to the eremophilane class and acting as a mycotoxin. The sequence is that of MFS-type transporter prx5 from Penicillium rubens (strain ATCC 28089 / DSM 1075 / NRRL 1951 / Wisconsin 54-1255) (Penicillium chrysogenum).